The chain runs to 399 residues: Chorismate synthase (399 aa).

NADP(+)-binding residues include Arg40 and Arg46. FMN contacts are provided by residues 135–137 (RAS), 256–257 (QA), Gly301, 316–320 (KPIAT), and Arg342.

It belongs to the chorismate synthase family. In terms of assembly, homotetramer. FMNH2 is required as a cofactor.

It catalyses the reaction 5-O-(1-carboxyvinyl)-3-phosphoshikimate = chorismate + phosphate. Its pathway is metabolic intermediate biosynthesis; chorismate biosynthesis; chorismate from D-erythrose 4-phosphate and phosphoenolpyruvate: step 7/7. In terms of biological role, catalyzes the anti-1,4-elimination of the C-3 phosphate and the C-6 proR hydrogen from 5-enolpyruvylshikimate-3-phosphate (EPSP) to yield chorismate, which is the branch point compound that serves as the starting substrate for the three terminal pathways of aromatic amino acid biosynthesis. This reaction introduces a second double bond into the aromatic ring system. The protein is Chorismate synthase of Arthrobacter sp. (strain FB24).